The chain runs to 214 residues: Protein-L-isoaspartate O-methyltransferase (214 aa).

Residue serine 63 is part of the active site.

Belongs to the methyltransferase superfamily. L-isoaspartyl/D-aspartyl protein methyltransferase family.

Its subcellular location is the cytoplasm. It catalyses the reaction [protein]-L-isoaspartate + S-adenosyl-L-methionine = [protein]-L-isoaspartate alpha-methyl ester + S-adenosyl-L-homocysteine. Functionally, catalyzes the methyl esterification of L-isoaspartyl residues in peptides and proteins that result from spontaneous decomposition of normal L-aspartyl and L-asparaginyl residues. It plays a role in the repair and/or degradation of damaged proteins. In Maridesulfovibrio salexigens (strain ATCC 14822 / DSM 2638 / NCIMB 8403 / VKM B-1763) (Desulfovibrio salexigens), this protein is Protein-L-isoaspartate O-methyltransferase.